A 564-amino-acid chain; its full sequence is Potassium-transporting ATPase potassium-binding subunit (564 aa).

10 helical membrane passes run 4–24 (YDFA…PWLG), 67–87 (TLAL…VLLL), 135–155 (LGLT…LVVL), 179–199 (LYGL…QGVP), 258–278 (FEVA…GHYV), 286–306 (AILA…LWSE), 382–402 (AGLY…GLMI), 420–440 (LLVA…AIAA), 487–507 (LMIG…ILAL), and 533–553 (GLLL…TLAL).

The protein belongs to the KdpA family. The system is composed of three essential subunits: KdpA, KdpB and KdpC.

It localises to the cell inner membrane. In terms of biological role, part of the high-affinity ATP-driven potassium transport (or Kdp) system, which catalyzes the hydrolysis of ATP coupled with the electrogenic transport of potassium into the cytoplasm. This subunit binds the periplasmic potassium ions and delivers the ions to the membrane domain of KdpB through an intramembrane tunnel. The protein is Potassium-transporting ATPase potassium-binding subunit of Pseudomonas putida (strain ATCC 47054 / DSM 6125 / CFBP 8728 / NCIMB 11950 / KT2440).